The primary structure comprises 305 residues: tRNA dimethylallyltransferase (305 aa).

15-22 (GPTASGKS) contacts ATP. 17 to 22 (TASGKS) contacts substrate. 2 interaction with substrate tRNA regions span residues 40 to 43 (DSMQ) and 164 to 168 (QRIVR).

It belongs to the IPP transferase family. Monomer. Mg(2+) serves as cofactor.

The enzyme catalyses adenosine(37) in tRNA + dimethylallyl diphosphate = N(6)-dimethylallyladenosine(37) in tRNA + diphosphate. Its function is as follows. Catalyzes the transfer of a dimethylallyl group onto the adenine at position 37 in tRNAs that read codons beginning with uridine, leading to the formation of N6-(dimethylallyl)adenosine (i(6)A). In Sinorhizobium medicae (strain WSM419) (Ensifer medicae), this protein is tRNA dimethylallyltransferase.